The primary structure comprises 75 residues: uncharacterized protein (75 aa).

A run of 2 helical transmembrane segments spans residues 7-26 (LINA…AASA) and 36-58 (MHLF…FCPV).

Its subcellular location is the cell membrane. This is an uncharacterized protein from Bacillus subtilis (strain 168).